The primary structure comprises 712 residues: Polyribonucleotide nucleotidyltransferase (712 aa).

Residues aspartate 487 and aspartate 493 each contribute to the Mg(2+) site. The KH domain maps to 554 to 613 (PKIITMTINPDKIRDVIGPSGKQINKIIEETGVKIDIEQDGTVFISSINQEMNDKAKKII). The S1 motif domain maps to 623–691 (GEIYEGKVKR…KQGRVNLSRK (69 aa)).

Belongs to the polyribonucleotide nucleotidyltransferase family. It depends on Mg(2+) as a cofactor.

The protein localises to the cytoplasm. The enzyme catalyses RNA(n+1) + phosphate = RNA(n) + a ribonucleoside 5'-diphosphate. Functionally, involved in mRNA degradation. Catalyzes the phosphorolysis of single-stranded polyribonucleotides processively in the 3'- to 5'-direction. The sequence is that of Polyribonucleotide nucleotidyltransferase from Bacillus cereus (strain G9842).